The chain runs to 921 residues: Isoleucine--tRNA ligase (921 aa).

Residues P59–H69 carry the 'HIGH' region motif. E569 serves as a coordination point for L-isoleucyl-5'-AMP. The 'KMSKS' region signature appears at K610–S614. K613 contacts ATP. Zn(2+) contacts are provided by C894, C897, C909, and C912.

The protein belongs to the class-I aminoacyl-tRNA synthetase family. IleS type 1 subfamily. In terms of assembly, monomer. Requires Zn(2+) as cofactor.

It localises to the cytoplasm. It catalyses the reaction tRNA(Ile) + L-isoleucine + ATP = L-isoleucyl-tRNA(Ile) + AMP + diphosphate. Its function is as follows. Catalyzes the attachment of isoleucine to tRNA(Ile). As IleRS can inadvertently accommodate and process structurally similar amino acids such as valine, to avoid such errors it has two additional distinct tRNA(Ile)-dependent editing activities. One activity is designated as 'pretransfer' editing and involves the hydrolysis of activated Val-AMP. The other activity is designated 'posttransfer' editing and involves deacylation of mischarged Val-tRNA(Ile). The sequence is that of Isoleucine--tRNA ligase from Campylobacter lari (strain RM2100 / D67 / ATCC BAA-1060).